The primary structure comprises 336 residues: UPF0284 protein PYRAB00380 (336 aa).

The protein belongs to the UPF0284 family.

In Pyrococcus abyssi (strain GE5 / Orsay), this protein is UPF0284 protein PYRAB00380.